The sequence spans 58 residues: Small ribosomal subunit protein eS30 (58 aa).

The segment at 1–58 (MGKVHGSLARAGKVKNQTPKVPKLDKKKRLTGRAKKRQLYNRRFSDNGGRKKGPNSKA) is disordered. Over residues 25–40 (DKKKRLTGRAKKRQLY) the composition is skewed to basic residues.

This sequence belongs to the eukaryotic ribosomal protein eS30 family. As to quaternary structure, component of the small ribosomal subunit. Mature ribosomes consist of a small (40S) and a large (60S) subunit. The 40S subunit contains about 32 different proteins and 1 molecule of RNA (18S). The 60S subunit contains about 42 different proteins and 3 molecules of RNA (28S, 5.8S and 5S).

Its subcellular location is the cytoplasm. Functionally, component of the ribosome, a large ribonucleoprotein complex responsible for the synthesis of proteins in the cell. The small ribosomal subunit (SSU) binds messenger RNAs (mRNAs) and translates the encoded message by selecting cognate aminoacyl-transfer RNA (tRNA) molecules. The large subunit (LSU) contains the ribosomal catalytic site termed the peptidyl transferase center (PTC), which catalyzes the formation of peptide bonds, thereby polymerizing the amino acids delivered by tRNAs into a polypeptide chain. The nascent polypeptides leave the ribosome through a tunnel in the LSU and interact with protein factors that function in enzymatic processing, targeting, and the membrane insertion of nascent chains at the exit of the ribosomal tunnel. This chain is Small ribosomal subunit protein eS30, found in Plasmodium falciparum (isolate 3D7).